The primary structure comprises 373 residues: Valienol-1-phosphate guanylyltransferase (373 aa).

Substrate is bound by residues G177 and 192–193 (EK).

It belongs to the bacterial/plant glucose-1-phosphate adenylyltransferase family. Mg(2+) is required as a cofactor.

It carries out the reaction valienol 1-phosphate + GTP + H(+) = GDP-valienol + diphosphate. Involved in the biosynthesis of the antifungal agent validamycin A. Catalyzes the conversion of valienol 1-phosphate to GDP-valienol and less effectively to ADP-valienol or other NDP derivatives. This chain is Valienol-1-phosphate guanylyltransferase, found in Streptomyces hygroscopicus subsp. limoneus.